A 500-amino-acid polypeptide reads, in one-letter code: Cytochrome P450 2D4 (500 aa).

A heme-binding site is contributed by Cys446.

The protein belongs to the cytochrome P450 family. Requires heme as cofactor. Brain.

The protein localises to the endoplasmic reticulum membrane. The protein resides in the microsome membrane. It catalyses the reaction an organic molecule + reduced [NADPH--hemoprotein reductase] + O2 = an alcohol + oxidized [NADPH--hemoprotein reductase] + H2O + H(+). Functionally, cytochromes P450 are a group of heme-thiolate monooxygenases. In liver microsomes, this enzyme is involved in an NADPH-dependent electron transport pathway. It oxidizes a variety of structurally unrelated compounds, including steroids, fatty acids, and xenobiotics. The chain is Cytochrome P450 2D4 (Cyp2d4) from Rattus norvegicus (Rat).